A 221-amino-acid chain; its full sequence is HP1-HOAP-interacting protein (221 aa).

Residues 69–113 (NAKRHKMARETAASITDVSGSQSSSHQSAPSLHVSGQSSEFGASY) are disordered. Residues 86–103 (VSGSQSSSHQSAPSLHVS) are compositionally biased toward low complexity.

In terms of assembly, component of the HipHop-HOAP telomere-capping complex, composed of at least HipHop and cav/HOAP, and may include Su(var)205/HP1; HipHop and cav/HOAP, but not Su(var)205, are interdependent for their protein stability. Interacts (via N-terminus) with cav/HOAP and Su(var)205/HP1. The HipHop-HOAP complex recruits the MTV complex, consisting of moi/modigliani, tea and ver/verrocchio, to telomeres to form the terminin telomere-capping complex.

It localises to the nucleus. The protein localises to the chromosome. Its subcellular location is the telomere. Its function is as follows. Part of the HipHop-HOAP complex that recruits the MTV complex to form the terminin telomere-capping complex, which binds to chromosome ends in a sequence-independent manner and prevents telomere fusion. The protein is HP1-HOAP-interacting protein of Drosophila melanogaster (Fruit fly).